The primary structure comprises 35 residues: Augerpeptide hheTx5 (35 aa).

Post-translationally, contains 4 disulfide bonds. In terms of tissue distribution, expressed by the venom duct.

The protein resides in the secreted. The polypeptide is Augerpeptide hheTx5 (Hastula hectica (Sea snail)).